The chain runs to 748 residues: MAADKAGEQGAEKHEGSANCSGISDQEKELSRSALQAFTAGNYEACLQHLGELKEINKDDYKVILNAAVAEFYKSDKTTTDLLKQTLNQLRNEVHSAVDEMDSLDDVENSMLYYNQAVILYYLRQHMEAISVGEKLYQFIEPFEEKFAHAVCFLLVDLYLLTFQTEKALHLLVVLEKMILQGNSNNKNGKNNETNSNANNKELFAQKGDGGVNVEAAKSKIHQYKVRAYIQMKSLKACKREIKSVMNTSGNSAPSLFLKSNFEYLRGNYRKAVKLLNSSNIAEYPGFMKTGECVRCMFWNNLGCIHFAMGKHNLGLFYFKKALHENDNACAQLPSENSDPGKKFSGRPMCTLLTNKRYELLYNCGIQLLHIGRPLAAFEYLVEAVQVYHSNPRLWLRLAECCIAANKGTSEQETKGLPSKKGIVQSIVGQGYHRKIVLASQSVQNLLYNDGESSAIPVASMEFAAICLRNALLLLPEDQLETKQENGSKASSQTVNTDSSGESSDVCSNKNHEGDKFIPAPPSSPLRRQEVENLRCSVLACIAYVALALGDNLMALNHAEKLLQQPRLSGSLKFLGHLYAAEALISLDRISDAITHLNPENVTDVSLGVSSNEQEQGSDKGENEPMESAGKQIPQCYPSSVTSARTMMLFNLGSAYCLRSEYDKARKCLHQAASMIHPKEIPPEAILLAVYLELQNGNTQLALQIIKRNQLLPSIRMMSDLRKKPLFQTMHQPMQPIQMPAFAAAQRK.

The span at 1–16 (MAADKAGEQGAEKHEG) shows a compositional bias: basic and acidic residues. 3 disordered regions span residues 1-25 (MAAD…GISD), 483-524 (KQEN…PPSS), and 605-634 (VSLG…KQIP). Polar residues-rich tracts occupy residues 487-509 (GSKA…VCSN) and 605-615 (VSLGVSSNEQE).

Belongs to the CNOT10 family. As to quaternary structure, component of the CCR4-NOT complex. cnot10 and cnot11 form a subcomplex docked to the cnot1 scaffold.

The protein localises to the cytoplasm. Its subcellular location is the nucleus. Its function is as follows. Component of the CCR4-NOT complex which is one of the major cellular mRNA deadenylases and is linked to various cellular processes including bulk mRNA degradation, miRNA-mediated repression, translational repression during translational initiation and general transcription regulation. Additional complex functions may be a consequence of its influence on mRNA expression. Is not required for association of CNOT7 to the CCR4-NOT complex. The sequence is that of CCR4-NOT transcription complex subunit 10-B (cnot10-b) from Xenopus laevis (African clawed frog).